The following is an 82-amino-acid chain: Small ribosomal subunit protein uS17 (82 aa).

This sequence belongs to the universal ribosomal protein uS17 family. As to quaternary structure, part of the 30S ribosomal subunit.

Its function is as follows. One of the primary rRNA binding proteins, it binds specifically to the 5'-end of 16S ribosomal RNA. In Shewanella woodyi (strain ATCC 51908 / MS32), this protein is Small ribosomal subunit protein uS17.